The following is a 79-amino-acid chain: Exodeoxyribonuclease 7 small subunit (79 aa).

Belongs to the XseB family. In terms of assembly, heterooligomer composed of large and small subunits.

The protein localises to the cytoplasm. The enzyme catalyses Exonucleolytic cleavage in either 5'- to 3'- or 3'- to 5'-direction to yield nucleoside 5'-phosphates.. Its function is as follows. Bidirectionally degrades single-stranded DNA into large acid-insoluble oligonucleotides, which are then degraded further into small acid-soluble oligonucleotides. In Lactococcus lactis subsp. lactis (strain IL1403) (Streptococcus lactis), this protein is Exodeoxyribonuclease 7 small subunit.